The primary structure comprises 95 residues: Large ribosomal subunit protein uL23 (95 aa).

Belongs to the universal ribosomal protein uL23 family. In terms of assembly, part of the 50S ribosomal subunit. Contacts protein L29, and trigger factor when it is bound to the ribosome.

Its function is as follows. One of the early assembly proteins it binds 23S rRNA. One of the proteins that surrounds the polypeptide exit tunnel on the outside of the ribosome. Forms the main docking site for trigger factor binding to the ribosome. The protein is Large ribosomal subunit protein uL23 of Anoxybacillus flavithermus (strain DSM 21510 / WK1).